Here is a 762-residue protein sequence, read N- to C-terminus: Mediator of RNA polymerase II transcription subunit 15 (762 aa).

Disordered regions lie at residues A70 to L102, G311 to P330, and G406 to Q494. The segment covering D76–G94 has biased composition (gly residues). A compositionally biased stretch (polar residues) spans Q465–G481.

This sequence belongs to the Mediator complex subunit 15 family. Component of the Mediator complex.

The protein localises to the nucleus. Its function is as follows. Component of the Mediator complex, a coactivator involved in the regulated transcription of nearly all RNA polymerase II-dependent genes. Mediator functions as a bridge to convey information from gene-specific regulatory proteins to the basal RNA polymerase II transcription machinery. Mediator is recruited to promoters by direct interactions with regulatory proteins and serves as a scaffold for the assembly of a functional preinitiation complex with RNA polymerase II and the general transcription factors. The chain is Mediator of RNA polymerase II transcription subunit 15 (MED15) from Anopheles gambiae (African malaria mosquito).